A 603-amino-acid chain; its full sequence is UvrABC system protein C (603 aa).

Positions 15–92 constitute a GIY-YIG domain; it reads DQPGCYLMKN…IQKHQPYYNI (78 aa). Residues 197–232 enclose the UVR domain; the sequence is AQVKKQLTARMERAAGQLEFERAAEIRDQLHYIEVT.

The protein belongs to the UvrC family. In terms of assembly, interacts with UvrB in an incision complex.

Its subcellular location is the cytoplasm. Its function is as follows. The UvrABC repair system catalyzes the recognition and processing of DNA lesions. UvrC both incises the 5' and 3' sides of the lesion. The N-terminal half is responsible for the 3' incision and the C-terminal half is responsible for the 5' incision. The polypeptide is UvrABC system protein C (Limosilactobacillus fermentum (strain NBRC 3956 / LMG 18251) (Lactobacillus fermentum)).